Consider the following 588-residue polypeptide: Probable cytochrome c oxidase subunit 1-beta (588 aa).

Residues 1–26 are disordered; that stretch reads MTATPAQRRPALPATRPYPARHGPKG. Residues 43–63 form a helical membrane-spanning segment; the sequence is VLYLVSATGFFLIGGLLALLM. A Fe(II)-heme a-binding site is contributed by His-87. 6 helical membrane-spanning segments follow: residues 90 to 110, 128 to 148, 171 to 191, 214 to 234, 259 to 279, and 291 to 311; these read IMLL…VLPL, WLYL…GGAA, LWIL…VNMI, ILIT…ALMA, LFWF…FGII, and IFGY…SMAV. Residues His-265 and Tyr-269 each contribute to the Cu cation site. The 1'-histidyl-3'-tyrosine (His-Tyr) cross-link spans 265-269; sequence HPEVY. Cu cation contacts are provided by His-314 and His-315. Transmembrane regions (helical) follow at residues 320 to 340 and 360 to 380; these read GAVL…PTGV and MLFA…GVIL. His-398 lines the heme a3 pocket. 3 helical membrane passes run 399–419, 434–454, and 477–497; these read FHYV…YFWF, LHFW…HWLG, and VSTI…WNGF. His-400 is a Fe(II)-heme a binding site. A disordered region spans residues 557–588; the sequence is AEAHAGRRAGHGAGAELSVPSTVATKDDDHTS.

This sequence belongs to the heme-copper respiratory oxidase family. In terms of assembly, associates with subunits II, III and IV to form cytochrome c oxidase. Cu(2+) serves as cofactor. Heme is required as a cofactor.

The protein localises to the cell membrane. The enzyme catalyses 4 Fe(II)-[cytochrome c] + O2 + 8 H(+)(in) = 4 Fe(III)-[cytochrome c] + 2 H2O + 4 H(+)(out). Its pathway is energy metabolism; oxidative phosphorylation. In terms of biological role, cytochrome c oxidase is the component of the respiratory chain that catalyzes the reduction of oxygen to water. Subunits 1-3 form the functional core of the enzyme complex. CO I is the catalytic subunit of the enzyme. Electrons originating in cytochrome c are transferred via the copper A center of subunit 2 and heme A of subunit 1 to the bimetallic center formed by heme A3 and copper B. This is Probable cytochrome c oxidase subunit 1-beta (ctaD2) from Nocardia farcinica (strain IFM 10152).